A 193-amino-acid polypeptide reads, in one-letter code: MPNWGGGKKCGVCQKTVYFAEEVQCEGSSFHKSCFLCLVCKKNLDSTTVAVHGEEIYCKSCYGKKYGPKGYGYGQGAGTLSMDKGESLGIRHEEAPGHRPTTNPNTSKFAQKVGGSERCPRCSQAVYAAEKVIGAGKSWHKSCFRCAKCGKGLESTTLADKDGEIYCKGCYAKNFGPKGFGFGQGAGALVHSE.

Residues 10 to 61 form the LIM zinc-binding 1 domain; sequence CGVCQKTVYFAEEVQCEGSSFHKSCFLCLVCKKNLDSTTVAVHGEEIYCKSC. A Nuclear localization signal motif is present at residues 64 to 69; it reads KKYGPK. Position 81 is a phosphoserine (S81). N6-acetyllysine occurs at positions 84, 112, 131, 137, and 161. The LIM zinc-binding 2 domain maps to 119 to 170; sequence CPRCSQAVYAAEKVIGAGKSWHKSCFRCAKCGKGLESTTLADKDGEIYCKGC. At S192 the chain carries Phosphoserine.

Interacts with ASCC1; ASCC2 and TRIP4.

The protein localises to the nucleus. Functionally, could play a role in neuronal development. This is Cysteine and glycine-rich protein 1 (CSRP1) from Bos taurus (Bovine).